A 115-amino-acid chain; its full sequence is Large ribosomal subunit protein bL20 (115 aa).

The protein belongs to the bacterial ribosomal protein bL20 family.

Its function is as follows. Binds directly to 23S ribosomal RNA and is necessary for the in vitro assembly process of the 50S ribosomal subunit. It is not involved in the protein synthesizing functions of that subunit. This is Large ribosomal subunit protein bL20 from Synechococcus sp. (strain CC9605).